Reading from the N-terminus, the 60-residue chain is Arabinogalactan protein 14 (60 aa).

The N-terminal stretch at 1–28 (MEAMKMKLYVVVLVAVIAFSTVHQTVAA) is a signal peptide. P32, P34, and P36 each carry 4-hydroxyproline. O-linked (Ara...) hydroxyproline glycosylation is found at P32, P34, and P36. S38 is lipidated: GPI-anchor amidated serine. A propeptide spans 39-60 (DASSFIPTFFASVAVMAFGFFF) (removed in mature form).

This sequence belongs to the AG-peptide AGP family. Post-translationally, contains 4-hydroxyproline; hydroxylated on Pro-32, Pro-34 and Pro-36. In terms of processing, O-glycosylated on hydroxyprolines; noncontiguous hydroxylproline residues are glycosylated with arabinogalactan.

It is found in the cell membrane. In terms of biological role, proteoglycan that seems to be implicated in diverse developmental roles such as differentiation, cell-cell recognition, embryogenesis and programmed cell death. Involved in the regulation of root hair elongation. In Arabidopsis thaliana (Mouse-ear cress), this protein is Arabinogalactan protein 14.